The following is a 101-amino-acid chain: Protein Tat (101 aa).

An interaction with human CREBBP region spans residues 1-24; sequence MDPVDPKLEPWNHPGSQPTTPCNK. The tract at residues 1 to 48 is transactivation; the sequence is MDPVDPKLEPWNHPGSQPTTPCNKCYCKVCCWHCQVCFLNKGLGISYG. Positions 22, 25, and 27 each coordinate Zn(2+). The cysteine-rich stretch occupies residues 22–37; it reads CNKCYCKVCCWHCQVC. Position 28 is an N6-acetyllysine; by host PCAF (lysine 28). Zn(2+)-binding residues include cysteine 30, histidine 33, cysteine 34, and cysteine 37. Residues 38–48 are core; the sequence is FLNKGLGISYG. The segment at 48-101 is disordered; that stretch reads GRKKRRPRRGTPQGSKDHQNPVPKQPLPITSGNPTGSEKPKKEVASKTETDPLD. The short motif at 49-57 is the Nuclear localization signal, RNA-binding (TAR), and protein transduction element; it reads RKKRRPRRG. The tract at residues 49 to 86 is interaction with the host capping enzyme RNGTT; sequence RKKRRPRRGTPQGSKDHQNPVPKQPLPITSGNPTGSEK. N6-acetyllysine; by host EP300 and GCN5L2 occurs at positions 50 and 51. 2 positions are modified to asymmetric dimethylarginine; by host PRMT6: arginine 52 and arginine 53. Lysine 71 is covalently cross-linked (Glycyl lysine isopeptide (Lys-Gly) (interchain with G-Cter in ubiquitin)). Residues 85–101 are compositionally biased toward basic and acidic residues; the sequence is EKPKKEVASKTETDPLD.

This sequence belongs to the lentiviruses Tat family. Interacts with host CCNT1. Associates with the P-TEFb complex composed at least of Tat, P-TEFb (CDK9 and CCNT1), TAR RNA, RNA Pol II. Recruits the HATs CREBBP, TAF1/TFIID, EP300, PCAF and GCN5L2. Interacts with host KAT5/Tip60; this interaction targets the latter to degradation. Interacts with the host deacetylase SIRT1. Interacts with host capping enzyme RNGTT; this interaction stimulates RNGTT. Binds to host KDR, and to the host integrins ITGAV/ITGB3 and ITGA5/ITGB1. Interacts with host KPNB1/importin beta-1 without previous binding to KPNA1/importin alpha-1. Interacts with EIF2AK2. Interacts with host nucleosome assembly protein NAP1L1; this interaction may be required for the transport of Tat within the nucleus, since the two proteins interact at the nuclear rim. Interacts with host C1QBP/SF2P32; this interaction involves lysine-acetylated Tat. Interacts with the host chemokine receptors CCR2, CCR3 and CXCR4. Interacts with host DPP4/CD26; this interaction may trigger an anti-proliferative effect. Interacts with host LDLR. Interacts with the host extracellular matrix metalloproteinase MMP1. Interacts with host PRMT6; this interaction mediates Tat's methylation. Interacts with, and is ubiquitinated by MDM2/Hdm2. Interacts with host PSMC3 and HTATIP2. Interacts with STAB1; this interaction may overcome SATB1-mediated repression of IL2 and IL2RA (interleukin) in T cells by binding to the same domain than HDAC1. Interacts (when acetylated) with human CDK13, thereby increasing HIV-1 mRNA splicing and promoting the production of the doubly spliced HIV-1 protein Nef. Interacts with host TBP; this interaction modulates the activity of transcriptional pre-initiation complex. Interacts with host RELA. Interacts with host PLSCR1; this interaction negatively regulates Tat transactivation activity by altering its subcellular distribution. In terms of processing, asymmetrical arginine methylation by host PRMT6 seems to diminish the transactivation capacity of Tat and affects the interaction with host CCNT1. Post-translationally, acetylation by EP300, CREBBP, GCN5L2/GCN5 and PCAF regulates the transactivation activity of Tat. EP300-mediated acetylation of Lys-50 promotes dissociation of Tat from the TAR RNA through the competitive binding to PCAF's bromodomain. In addition, the non-acetylated Tat's N-terminus can also interact with PCAF. PCAF-mediated acetylation of Lys-28 enhances Tat's binding to CCNT1. Lys-50 is deacetylated by SIRT1. Polyubiquitination by host MDM2 does not target Tat to degradation, but activates its transactivation function and fosters interaction with CCNT1 and TAR RNA. In terms of processing, phosphorylated by EIF2AK2 on serine and threonine residues adjacent to the basic region important for TAR RNA binding and function. Phosphorylation of Tat by EIF2AK2 is dependent on the prior activation of EIF2AK2 by dsRNA.

It localises to the host nucleus. Its subcellular location is the host nucleolus. The protein localises to the host cytoplasm. The protein resides in the secreted. Its function is as follows. Transcriptional activator that increases RNA Pol II processivity, thereby increasing the level of full-length viral transcripts. Recognizes a hairpin structure at the 5'-LTR of the nascent viral mRNAs referred to as the transactivation responsive RNA element (TAR) and recruits the cyclin T1-CDK9 complex (P-TEFb complex) that will in turn hyperphosphorylate the RNA polymerase II to allow efficient elongation. The CDK9 component of P-TEFb and other Tat-activated kinases hyperphosphorylate the C-terminus of RNA Pol II that becomes stabilized and much more processive. Other factors such as HTATSF1/Tat-SF1, SUPT5H/SPT5, and HTATIP2 are also important for Tat's function. Besides its effect on RNA Pol II processivity, Tat induces chromatin remodeling of proviral genes by recruiting the histone acetyltransferases (HATs) CREBBP, EP300 and PCAF to the chromatin. This also contributes to the increase in proviral transcription rate, especially when the provirus integrates in transcriptionally silent region of the host genome. To ensure maximal activation of the LTR, Tat mediates nuclear translocation of NF-kappa-B by interacting with host RELA. Through its interaction with host TBP, Tat may also modulate transcription initiation. Tat can reactivate a latently infected cell by penetrating in it and transactivating its LTR promoter. In the cytoplasm, Tat is thought to act as a translational activator of HIV-1 mRNAs. In terms of biological role, extracellular circulating Tat can be endocytosed by surrounding uninfected cells via the binding to several surface receptors such as CD26, CXCR4, heparan sulfate proteoglycans (HSPG) or LDLR. Neurons are rarely infected, but they internalize Tat via their LDLR. Through its interaction with nuclear HATs, Tat is potentially able to control the acetylation-dependent cellular gene expression. Modulates the expression of many cellular genes involved in cell survival, proliferation or in coding for cytokines or cytokine receptors. Tat plays a role in T-cell and neurons apoptosis. Tat induced neurotoxicity and apoptosis probably contribute to neuroAIDS. Circulating Tat also acts as a chemokine-like and/or growth factor-like molecule that binds to specific receptors on the surface of the cells, affecting many cellular pathways. In the vascular system, Tat binds to ITGAV/ITGB3 and ITGA5/ITGB1 integrins dimers at the surface of endothelial cells and competes with bFGF for heparin-binding sites, leading to an excess of soluble bFGF. The chain is Protein Tat from Homo sapiens (Human).